The sequence spans 324 residues: Zinc finger C2HC domain-containing protein 1A (324 aa).

Residues 15-44 form a C2HC/C3H-type 1 zinc finger; that stretch reads ELLPCKICGRTFFPVALKKHGPICKKTATK. The Zn(2+) site is built by Cys19, Cys22, His34, and Cys38. The tract at residues 43–83 is disordered; it reads TKKRKTFDSSRQRAEGTDIPTVKPLKPRPEPPKKPSNWRRK. Over residues 48 to 58 the composition is skewed to basic and acidic residues; it reads TFDSSRQRAEG. A C2HC/C3H-type 2 zinc finger spans residues 118–147; it reads DYIQCPYCQRRFNENAADRHINFCKEQAAR. Zn(2+) contacts are provided by Cys122, Cys125, His137, and Cys141. Disordered stretches follow at residues 150 to 224 and 236 to 259; these read NKGK…LSPS and NVKPRNSTPPSLARNPAPGVLTNK. Low complexity-rich tracts occupy residues 176–187 and 196–215; these read SNSPGTASSGSS and GKTVVGVPSGKVSSSSSSLG. At Ser222 the chain carries Phosphoserine. The residue at position 243 (Thr243) is a Phosphothreonine. Phosphoserine is present on Ser291.

It belongs to the ZC2HC1 family. Requires Zn(2+) as cofactor.

This is Zinc finger C2HC domain-containing protein 1A (ZC2HC1A) from Pongo abelii (Sumatran orangutan).